The sequence spans 293 residues: Protoheme IX farnesyltransferase (293 aa).

Transmembrane regions (helical) follow at residues 9–29 (LIKP…FLLA), 38–58 (YIIL…SCVL), 86–106 (FVKN…LFLG), 111–131 (LLTI…YSLW), 137–157 (IYST…GYCT), 167–187 (WLLF…ITIF), 211–231 (IHMI…TVLG), 234–254 (SYTF…TGWY), and 271–291 (ILSI…SIFI).

Belongs to the UbiA prenyltransferase family. Protoheme IX farnesyltransferase subfamily.

The protein localises to the cell inner membrane. The catalysed reaction is heme b + (2E,6E)-farnesyl diphosphate + H2O = Fe(II)-heme o + diphosphate. Its pathway is porphyrin-containing compound metabolism; heme O biosynthesis; heme O from protoheme: step 1/1. Converts heme B (protoheme IX) to heme O by substitution of the vinyl group on carbon 2 of heme B porphyrin ring with a hydroxyethyl farnesyl side group. The polypeptide is Protoheme IX farnesyltransferase (Blochmanniella floridana).